Consider the following 176-residue polypeptide: Flavodoxin 1 (176 aa).

The Flavodoxin-like domain occupies threonine 4–serine 165.

It belongs to the flavodoxin family. Requires FMN as cofactor.

Functionally, low-potential electron donor to a number of redox enzymes (Potential). Involved in the reactivation of inactive cob(II)alamin in methionine synthase. The protein is Flavodoxin 1 (fldA) of Escherichia coli O157:H7.